A 212-amino-acid chain; its full sequence is Telomere repeats-binding bouquet formation protein 2 (212 aa).

Belongs to the TERB2 family. As to quaternary structure, component of the MAJIN-TERB1-TERB2 complex.

Functionally, meiosis-specific telomere-associated protein involved in meiotic telomere attachment to the nucleus inner membrane, a crucial step for homologous pairing and synapsis. Component of the MAJIN-TERB1-TERB2 complex, which promotes telomere cap exchange by mediating attachment of telomeric DNA to the inner nuclear membrane and replacement of the protective cap of telomeric chromosomes: in early meiosis, the MAJIN-TERB1-TERB2 complex associates with telomeric DNA and the shelterin/telosome complex. During prophase, the complex matures and promotes release of the shelterin/telosome complex from telomeric DNA. In Danio rerio (Zebrafish), this protein is Telomere repeats-binding bouquet formation protein 2.